The primary structure comprises 369 residues: Cobalt-precorrin-5B C(1)-methyltransferase (369 aa).

Belongs to the CbiD family.

The catalysed reaction is Co-precorrin-5B + S-adenosyl-L-methionine = Co-precorrin-6A + S-adenosyl-L-homocysteine. It participates in cofactor biosynthesis; adenosylcobalamin biosynthesis; cob(II)yrinate a,c-diamide from sirohydrochlorin (anaerobic route): step 6/10. Its function is as follows. Catalyzes the methylation of C-1 in cobalt-precorrin-5B to form cobalt-precorrin-6A. The chain is Cobalt-precorrin-5B C(1)-methyltransferase from Brucella melitensis biotype 1 (strain ATCC 23456 / CCUG 17765 / NCTC 10094 / 16M).